A 377-amino-acid polypeptide reads, in one-letter code: N-acetyldiaminopimelate deacetylase (377 aa).

D70 is an active-site residue. The Proton acceptor role is filled by E129.

This sequence belongs to the peptidase M20A family. N-acetyldiaminopimelate deacetylase subfamily.

It carries out the reaction N-acetyl-(2S,6S)-2,6-diaminopimelate + H2O = (2S,6S)-2,6-diaminopimelate + acetate. It functions in the pathway amino-acid biosynthesis; L-lysine biosynthesis via DAP pathway; LL-2,6-diaminopimelate from (S)-tetrahydrodipicolinate (acetylase route): step 3/3. Its function is as follows. Catalyzes the conversion of N-acetyl-diaminopimelate to diaminopimelate and acetate. In Streptococcus thermophilus (strain ATCC BAA-491 / LMD-9), this protein is N-acetyldiaminopimelate deacetylase.